Reading from the N-terminus, the 452-residue chain is MRRALGTLGCCLALLLPLLPAARGVPHRHRRQPLGSGLGRHGAADTACKNRPLDLVFIIDSSRSVRPEEFEKVKIFLSKMIDTLDVGERTTRVAVMNYASTVKVEFPLRTYFDKASMKEAVSRIQPLSAGTMTGLAIQAAMDEVFTEEMGTRPANFNIPKVVIIVTDGRPQDQVENVAANARTAGIEIYAVGVGRADMQSLRIMASEPLDEHVFYVETYGVIEKLTSKFRETFCAANTCALGTHDCEQVCVSNDGSYLCDCYEGYTLNPDKRTCSAVDVCAPGRHECDQICVSNNGSYVCECFEGYTLNPDKKTCSAMDVCAPGRHDCAQVCRRNGGSYSCDCFEGFTLNPDKKTCSAVDVCAPGRHDCEQVCVRDDLFYTCDCYQGYVLNPDKKTCSRATTSSLVTDEEACKCEAIAALQDSVTSRLEALSTKLDEVSQKLQAYQDRQQVV.

A signal peptide spans 1–24 (MRRALGTLGCCLALLLPLLPAARG). Positions 54–229 (DLVFIIDSSR…GVIEKLTSKF (176 aa)) constitute a VWFA domain. EGF-like domains lie at 235-275 (AANT…RTCS), 276-316 (AVDV…KTCS), 317-357 (AMDV…KTCS), and 358-398 (AVDV…KTCS). Cystine bridges form between C239–C250, C246–C259, C261–C274, C280–C291, C287–C300, C302–C315, C321–C332, C328–C341, C343–C356, C362–C373, C369–C382, and C384–C397. The N-linked (GlcNAc...) asparagine glycan is linked to N295. Residues 419–451 (ALQDSVTSRLEALSTKLDEVSQKLQAYQDRQQV) adopt a coiled-coil conformation.

Can form homooligomers (monomers, dimers, trimers and tetramers) and heterooligomers with matrilin-1. Expression is restricted to cartilaginous tissues.

It is found in the secreted. In terms of biological role, major component of the extracellular matrix of cartilage and may play a role in the formation of extracellular filamentous networks. This Gallus gallus (Chicken) protein is Matrilin-3 (MATN3).